We begin with the raw amino-acid sequence, 183 residues long: Shikimate kinase (183 aa).

ATP is bound at residue 25 to 30 (GAGKTT). Residue Thr29 participates in Mg(2+) binding. Asp47, Arg71, and Gly93 together coordinate substrate. Position 131 (Arg131) interacts with ATP. Arg150 is a binding site for substrate.

This sequence belongs to the shikimate kinase family. Monomer. Mg(2+) serves as cofactor.

The protein resides in the cytoplasm. It catalyses the reaction shikimate + ATP = 3-phosphoshikimate + ADP + H(+). It participates in metabolic intermediate biosynthesis; chorismate biosynthesis; chorismate from D-erythrose 4-phosphate and phosphoenolpyruvate: step 5/7. Functionally, catalyzes the specific phosphorylation of the 3-hydroxyl group of shikimic acid using ATP as a cosubstrate. The protein is Shikimate kinase of Dechloromonas aromatica (strain RCB).